We begin with the raw amino-acid sequence, 130 residues long: UPF0713 protein YngL (130 aa).

3 helical membrane-spanning segments follow: residues 4 to 25, 62 to 84, and 89 to 111; these read LSFLTFIMLILASYRLTHLIVF, MLNCYWCAGVWCAILIGLGYLFL, and IPLIFILAIAGAQAILETAVGVG.

This sequence belongs to the UPF0713 family.

It is found in the cell membrane. The polypeptide is UPF0713 protein YngL (yngL) (Bacillus subtilis (strain 168)).